The primary structure comprises 308 residues: Glutaminase (308 aa).

Positions 66, 117, 161, 168, 192, 244, and 262 each coordinate substrate.

Belongs to the glutaminase family. Homotetramer.

It carries out the reaction L-glutamine + H2O = L-glutamate + NH4(+). The chain is Glutaminase from Cronobacter sakazakii (strain ATCC BAA-894) (Enterobacter sakazakii).